The following is a 189-amino-acid chain: Parkinson disease protein 7 homolog (189 aa).

S-palmitoyl cysteine attachment occurs at residues Cys46 and Cys53. The residue at position 67 (Tyr67) is a Phosphotyrosine. The S-palmitoyl cysteine moiety is linked to residue Cys106. The Nucleophile role is filled by Cys106. Cys106 bears the Cysteine sulfinic acid (-SO2H) mark. Cys106 is subject to Cysteine sulfinic acid (-SO2H); alternate. Cys106 carries the S-palmitoyl cysteine; alternate lipid modification. The active site involves His126. Lys130 participates in a covalent cross-link: Glycyl lysine isopeptide (Lys-Gly) (interchain with G-Cter in SUMO). Lys148 bears the N6-acetyllysine mark. N6-succinyllysine is present on Lys182.

Belongs to the peptidase C56 family. In terms of assembly, homodimer. It depends on Deglycase activity does not require glutathione as a cofactor, however, glycated glutathione constitutes a PARK7 substrate. as a cofactor. Sumoylated on Lys-130 by pias2 or pias4; which is essential for cell-growth promoting activity and transforming activity. In terms of processing, undergoes cleavage of a C-terminal peptide and subsequent activation of protease activity in response to oxidative stress. Larval brain and gut from 96 hours post-fertilization (hpf). Ubiquitous in adult; most abundant in brain, eye, heart and muscle. Within brain, neuronal expression is widespread, particularly in the cerebellum, medullary reticular formation and diencephalon. Expressed in major forebrain and diencephalic dopaminergic cell groups.

The protein resides in the cell membrane. Its subcellular location is the cytoplasm. The protein localises to the nucleus. It is found in the membrane raft. It localises to the mitochondrion. The protein resides in the endoplasmic reticulum. It catalyses the reaction N(omega)-(1-hydroxy-2-oxopropyl)-L-arginyl-[protein] + H2O = lactate + L-arginyl-[protein] + H(+). The catalysed reaction is N(6)-(1-hydroxy-2-oxopropyl)-L-lysyl-[protein] + H2O = lactate + L-lysyl-[protein] + H(+). It carries out the reaction S-(1-hydroxy-2-oxopropyl)-L-cysteinyl-[protein] + H2O = lactate + L-cysteinyl-[protein] + H(+). The enzyme catalyses N(omega)-(1-hydroxy-2-oxoethyl)-L-arginyl-[protein] + H2O = L-arginyl-[protein] + glycolate + H(+). It catalyses the reaction N(6)-(1-hydroxy-2-oxoethyl)-L-lysyl-[protein] + H2O = glycolate + L-lysyl-[protein] + H(+). The catalysed reaction is S-(1-hydroxy-2-oxoethyl)-L-cysteinyl-[protein] + H2O = glycolate + L-cysteinyl-[protein] + H(+). It carries out the reaction N(2)-(1-hydroxy-2-oxopropyl)-dGTP + H2O = lactate + dGTP + H(+). The enzyme catalyses N(2)-(1-hydroxy-2-oxopropyl)-GTP + H2O = lactate + GTP + H(+). It catalyses the reaction N(2)-(1-hydroxy-2-oxopropyl)-GDP + H2O = lactate + GDP + H(+). The catalysed reaction is N(2)-(1-hydroxy-2-oxopropyl)-GMP + H2O = lactate + GMP + H(+). It carries out the reaction N(2)-(1-hydroxy-2-oxoethyl)-dGTP + H2O = dGTP + glycolate + H(+). The enzyme catalyses N(2)-(1-hydroxy-2-oxoethyl)-GTP + H2O = glycolate + GTP + H(+). It catalyses the reaction N(2)-(1-hydroxy-2-oxoethyl)-GDP + H2O = glycolate + GDP + H(+). The catalysed reaction is N(2)-(1-hydroxy-2-oxoethyl)-GMP + H2O = glycolate + GMP + H(+). It carries out the reaction an N(2)-(1-hydroxy-2-oxopropyl)-guanosine in RNA + H2O = a guanosine in RNA + lactate + H(+). The enzyme catalyses an N(2)-(1-hydroxy-2-oxopropyl)-2'-deoxyguanosine in DNA + H2O = a 2'-deoxyguanosine in DNA + lactate + H(+). It catalyses the reaction an N(2)-(1-hydroxy-2-oxoethyl)-guanosine in RNA + H2O = a guanosine in RNA + glycolate + H(+). The catalysed reaction is an N(2)-(1-hydroxy-2-oxoethyl)-2'-deoxyguanosine in DNA + H2O = a 2'-deoxyguanosine in DNA + glycolate + H(+). In terms of biological role, multifunctional protein with controversial molecular function which plays an important role in cell protection against oxidative stress and cell death acting as oxidative stress sensor and redox-sensitive chaperone and protease. It is involved in neuroprotective mechanisms like the stabilization of NFE2L2 and PINK1 proteins, male fertility as a positive regulator of androgen signaling pathway as well as cell growth and transformation through, for instance, the modulation of NF-kappa-B signaling pathway. Has been described as a protein and nucleotide deglycase that catalyzes the deglycation of the Maillard adducts formed between amino groups of proteins or nucleotides and reactive carbonyl groups of glyoxals. But this function is rebuted by other works. As a protein deglycase, repairs methylglyoxal- and glyoxal-glycated proteins, and releases repaired proteins and lactate or glycolate, respectively. Deglycates cysteine, arginine and lysine residues in proteins, and thus reactivates these proteins by reversing glycation by glyoxals. Acts on early glycation intermediates (hemithioacetals and aminocarbinols), preventing the formation of advanced glycation endproducts (AGE) that cause irreversible damage. Also functions as a nucleotide deglycase able to repair glycated guanine in the free nucleotide pool (GTP, GDP, GMP, dGTP) and in DNA and RNA. Is thus involved in a major nucleotide repair system named guanine glycation repair (GG repair), dedicated to reversing methylglyoxal and glyoxal damage via nucleotide sanitization and direct nucleic acid repair. Protects histones from adduction by methylglyoxal, controls the levels of methylglyoxal-derived argininine modifications on chromatin. Displays a very low glyoxalase activity that may reflect its deglycase activity. It is involved in neuroprotective mechanisms as well as cell growth and transformation. Its involvement in protein repair could also explain other unrelated functions. Eliminates hydrogen peroxide and protects cells against hydrogen peroxide-induced cell death. Required for correct mitochondrial morphology and function as well as for autophagy of dysfunctional mitochondria. Regulates astrocyte inflammatory responses, may modulate lipid rafts-dependent endocytosis in astrocytes and neuronal cells. Binds to a number of mRNAs containing multiple copies of GG or CC motifs and partially inhibits their translation but dissociates following oxidative stress. Metal-binding protein able to bind copper as well as toxic mercury ions, enhances the cell protection mechanism against induced metal toxicity. In Danio rerio (Zebrafish), this protein is Parkinson disease protein 7 homolog.